Reading from the N-terminus, the 20-residue chain is Collagenolytic protease 36 kDa C (20 aa).

Positions 1-20 constitute a Peptidase S1 domain; it reads IVGGSEATSGQFPYQXSFQD. The interval 1–20 is disordered; the sequence is IVGGSEATSGQFPYQXSFQD.

This sequence belongs to the peptidase S1 family.

It carries out the reaction Hydrolysis of proteins, with broad specificity for peptide bonds. Native collagen is cleaved about 75% of the length of the molecule from the N-terminus. Low activity on small molecule substrates of both trypsin and chymotrypsin.. Functionally, this enzyme is a serine protease capable of degrading the native triple helix of collagen. This chain is Collagenolytic protease 36 kDa C, found in Paralithodes camtschaticus (Red king crab).